The chain runs to 400 residues: Phosphoglycerate kinase (400 aa).

Residues 22–24, Arg-38, 61–64, Arg-119, and Arg-152 each bind substrate; these read DFN and HLGR. Residues Lys-205, Gly-296, Glu-327, and 353-356 contribute to the ATP site; that span reads GGDT.

This sequence belongs to the phosphoglycerate kinase family. In terms of assembly, monomer.

It localises to the cytoplasm. It carries out the reaction (2R)-3-phosphoglycerate + ATP = (2R)-3-phospho-glyceroyl phosphate + ADP. It functions in the pathway carbohydrate degradation; glycolysis; pyruvate from D-glyceraldehyde 3-phosphate: step 2/5. The protein is Phosphoglycerate kinase of Campylobacter jejuni subsp. jejuni serotype O:2 (strain ATCC 700819 / NCTC 11168).